The primary structure comprises 722 residues: Phenylalanine ammonia-lyase lenB (722 aa).

Tyr83 acts as the Proton donor/acceptor in catalysis. The interval 117–136 (LPTDRSSSRPSSRYPHGLRS) is disordered. A cross-link (5-imidazolinone (Ala-Gly)) is located at residues 190–192 (ASG). Ser191 is modified (2,3-didehydroalanine (Ser)). Residues Asn247, Gln334, Arg340, Asn370, Lys441, Glu469, and Asn472 each contribute to the (E)-cinnamate site.

This sequence belongs to the PAL/histidase family. Contains an active site 4-methylidene-imidazol-5-one (MIO), which is formed autocatalytically by cyclization and dehydration of residues Ala-Ser-Gly.

It catalyses the reaction L-phenylalanine = (E)-cinnamate + NH4(+). The protein operates within alkaloid biosynthesis. Phenylalanine ammonia-lyase; part of the gene cluster that mediates the biosynthesis of the ergot alkaloids lentopeptins A and B. Within the pathway, lenB provides the cinnamic acid starter unit for the synthesis of the N-acyldiketopiperazine intermediate by the NRPS lenA. Cinnamic acid is condensed with the Ala-Val-Ala peptide chain by lenA which leads to the N-acyldiketopiperazine intermediate which in turn is converted into lentopeptins A and B by the cytochrome P450 monooxygenase lenC. This chain is Phenylalanine ammonia-lyase lenB, found in Aspergillus lentulus.